Reading from the N-terminus, the 465-residue chain is Monogalactosyldiacylglycerol synthase 3, chloroplastic (465 aa).

Residues histidine 86, arginine 255, glycine 365–glutamate 369, and glutamate 387 each bind UDP.

This sequence belongs to the glycosyltransferase 28 family. In terms of tissue distribution, expressed mainly in roots. Detected in flowers, leaves, stems, siliques and pollen tubes.

Its subcellular location is the plastid. It is found in the chloroplast outer membrane. It catalyses the reaction a 1,2-diacyl-sn-glycerol + UDP-alpha-D-galactose = a 1,2-diacyl-3-O-(beta-D-galactosyl)-sn-glycerol + UDP + H(+). The enzyme catalyses 1,2-di-(9Z,12Z-octadecadienoyl)-sn-glycerol + UDP-alpha-D-galactose = 1,2-di-(9Z,12Z-octadecadienoyl)-3-beta-D-galactosyl-sn-glycerol + UDP + H(+). The catalysed reaction is 1-(9Z-octadecenoyl)-2-hexadecanoyl-sn-glycerol + UDP-alpha-D-galactose = 1-(9Z-octadecenoyl)-2-hexadecanoyl-3-beta-D-galactosyl-sn-glycerol + UDP + H(+). It carries out the reaction 1,2-di-(9Z-octadecenoyl)-sn-glycerol + UDP-alpha-D-galactose = 1,2-di-(9Z-octadecenoyl)-3-beta-D-galactosyl-sn-glycerol + UDP + H(+). With respect to regulation, inhibited by galvestine-1. Involved in the synthesis of monogalactosyldiacylglycerol, the major structural component of photosynthetic membranes and in the chloroplast envelope biogenesis. Can use both prokaryotic (18:1/16:0) or eukaryotic (18:2/18:2) 1,2-diacylglycerol species, but operates with some preference for the eukaryotic one. Plays a minor role in galactolipid synthesis in chloroplasts. Is essential for membrane lipid remodeling in phosphate-starved roots. Acts as the major factor involved in digalactosyldiacylglycerol (DGDG) biosynthesis in phosphate-starved roots. Does not seem to be required for plant growth under nutrient-sufficient conditions. Required for membrane lipid remodeling in plants grown in acidic conditions. This chain is Monogalactosyldiacylglycerol synthase 3, chloroplastic, found in Arabidopsis thaliana (Mouse-ear cress).